Here is an 86-residue protein sequence, read N- to C-terminus: RNA-binding protein Hfq (86 aa).

A Sm domain is found at 12–73 (DIFLNQVRKE…ISTITPQKPV (62 aa)).

It belongs to the Hfq family. In terms of assembly, homohexamer.

Its function is as follows. RNA chaperone that binds small regulatory RNA (sRNAs) and mRNAs to facilitate mRNA translational regulation in response to envelope stress, environmental stress and changes in metabolite concentrations. Also binds with high specificity to tRNAs. This is RNA-binding protein Hfq from Thermoanaerobacter pseudethanolicus (strain ATCC 33223 / 39E) (Clostridium thermohydrosulfuricum).